The sequence spans 514 residues: Light-independent protochlorophyllide reductase subunit B (514 aa).

Aspartate 36 is a binding site for [4Fe-4S] cluster. Aspartate 300 serves as the catalytic Proton donor. 435 to 436 (GM) lines the substrate pocket.

This sequence belongs to the ChlB/BchB/BchZ family. In terms of assembly, protochlorophyllide reductase is composed of three subunits; ChlL, ChlN and ChlB. Forms a heterotetramer of two ChlB and two ChlN subunits. The cofactor is [4Fe-4S] cluster.

The protein localises to the plastid. It is found in the chloroplast. It catalyses the reaction chlorophyllide a + oxidized 2[4Fe-4S]-[ferredoxin] + 2 ADP + 2 phosphate = protochlorophyllide a + reduced 2[4Fe-4S]-[ferredoxin] + 2 ATP + 2 H2O. It participates in porphyrin-containing compound metabolism; chlorophyll biosynthesis (light-independent). Functionally, component of the dark-operative protochlorophyllide reductase (DPOR) that uses Mg-ATP and reduced ferredoxin to reduce ring D of protochlorophyllide (Pchlide) to form chlorophyllide a (Chlide). This reaction is light-independent. The NB-protein (ChlN-ChlB) is the catalytic component of the complex. In Pleurastrum terricola (Filamentous green alga), this protein is Light-independent protochlorophyllide reductase subunit B.